The chain runs to 210 residues: Helix-loop-helix protein 26 (210 aa).

Residues 1 to 15 (MSSSPTSSSSGSPSS) show a composition bias toward low complexity. The disordered stretch occupies residues 1 to 33 (MSSSPTSSSSGSPSSHGHRSETEKQRRDDTNDL). Residues 14–65 (SSHGHRSETEKQRRDDTNDLLNEFKKIVQKSESEKLSKEEVLFRIVKLLSGI) enclose the bHLH domain. Basic and acidic residues predominate over residues 18–33 (HRSETEKQRRDDTNDL).

Homodimer; binds to DNA as a homodimer. In terms of tissue distribution, expressed in intestinal cells (at protein level).

The protein localises to the nucleus. As a homodimer binds DNA via the E-box sequence 5'-CACGTG-3'. Represses lag-2 transcription during embryogenesis via Notch signaling, in an unc-37-dependent manner. Also represses tbx-37 independent of Notch signaling. In the intestine, plays a role in probiotic-mediated protection against infections by pathogens such as S.enterica. This is most likely by positively regulating the expression of genes such as bar-1 upon exposure to probiotic bacteria such as the E.faecium. In Caenorhabditis elegans, this protein is Helix-loop-helix protein 26.